Reading from the N-terminus, the 238-residue chain is Probable transcriptional regulatory protein ABC1956 (238 aa).

The protein belongs to the TACO1 family. YeeN subfamily.

Its subcellular location is the cytoplasm. The chain is Probable transcriptional regulatory protein ABC1956 from Shouchella clausii (strain KSM-K16) (Alkalihalobacillus clausii).